We begin with the raw amino-acid sequence, 833 residues long: MMPPTRLAGTLIPAMAFLSCLRPESWDPCVEVVPNITYQCMDLNLHKIPDNIPSSTKDLDMSFNPLRNLGSHSFSNFPELQVLDLSRCEIQIIEDDAYQGLNHLSILILTGNPIQRLFPGAFSGLSSLQTLVAVETNIASLEDFPIGHLKTLKELNVAHNLIHSFKLPEYFSNMSNLEYLDLSNNKIQNIYHKDLQVLHQKPLLNLSLDLSLNPLDFIQPGAFKEVKLRELTLRSNFNSTDVMKASIQGLAGLQIHQLVLGEFKNERNLGRFDKSILEGLCNLIIEKFRIAYFDKFSEDAIDSFNCLANVSTISLVHLYFKGLKQLPKNLGWQRLELVNCEFEQFPTWKLDPLKELVFSANEVRNAFTQVKLESLEFLDLSRNDFSLKSCCSERDLGTTRLKHLDLSFNNIITISSNFLGLEQLEYLDFQHSSLKQVSDFSVFLPLKNLRYLDISYTHTQVAFHGIFNGLISLQILKMAGNSFQDNFLPNIFMELTNLTILDLSDCQLEQVSQVAFNSLPKLQLLNMSHNHLLSLDTLPYEPLHSLQTLDCSFNRIVASKEQELRHFPSNLSSLNLTRNDFACVCEHQSFLQWVKDQRQLLVEVEQMVCAKPLDMQGMPMLNFRNATCQVRKTIITGSVFTVLLVFLVVVLVYKFYFHLMLLAGCKKYSRGESTYDAFVIYSSQDEDWVRNELVKNLEEGVPPFQLCLHYRDFIPGVAIAANIIQEGFHKSRKVIVVVSQHFIQSRWCIFEYGIAQTWQFLSSRAGIIFIVLQKLEKSLLRQQVELYRLLNRNTYLEWEDSVLGRHIFWRRLRKALLDGKPRCPEGMADAEGS.

Residues 1–23 (MMPPTRLAGTLIPAMAFLSCLRP) form the signal peptide. Residues 24 to 54 (ESWDPCVEVVPNITYQCMDLNLHKIPDNIPS) enclose the LRRNT domain. Topologically, residues 24 to 632 (ESWDPCVEVV…FRNATCQVRK (609 aa)) are extracellular. A disulfide bond links Cys-29 and Cys-40. N-linked (GlcNAc...) asparagine glycosylation occurs at Asn-35. 5 LRR repeats span residues 55–76 (STKD…SFSN), 79–100 (ELQV…AYQG), 103–124 (HLSI…AFSG), 127–148 (SLQT…PIGH), and 151–172 (TLKE…EYFS). The N-linked (GlcNAc...) asparagine glycan is linked to Asn-173. LRR repeat units lie at residues 176 to 197 (NLEY…DLQV), 205 to 225 (NLSL…AFKE), and 227 to 236 (KLRELTLRSN). Asn-205 carries an N-linked (GlcNAc...) asparagine glycan. Asn-238 carries an N-linked (GlcNAc...) asparagine glycan. Cys-281 and Cys-306 are disulfide-bonded. Asn-309 carries an N-linked (GlcNAc...) asparagine glycan. LRR repeat units lie at residues 352–373 (PLKE…VKLE), 374–394 (SLEF…CSER), 400–420 (RLKH…NFLG), 423–444 (QLEY…SVFL), 448–456 (NLRYLDISY), 472–495 (SLQI…FMEL), 497–518 (NLTI…AFNS), 521–542 (KLQL…PYEP), and 545–565 (SLQT…QELR). A disulfide bridge links Cys-390 with Cys-391. Asn-497 and Asn-526 each carry an N-linked (GlcNAc...) asparagine glycan. N-linked (GlcNAc...) asparagine glycosylation is found at Asn-570 and Asn-575. In terms of domain architecture, LRRCT spans 579–630 (NDFACVCEHQSFLQWVKDQRQLLVEVEQMVCAKPLDMQGMPMLNFRNATCQV). 2 disulfide bridges follow: Cys-583-Cys-609 and Cys-585-Cys-628. An N-linked (GlcNAc...) asparagine glycan is attached at Asn-625. The helical transmembrane segment at 633–653 (TIITGSVFTVLLVFLVVVLVY) threads the bilayer. The Cytoplasmic segment spans residues 654-833 (KFYFHLMLLA…PEGMADAEGS (180 aa)). The TIR domain maps to 673 to 816 (STYDAFVIYS…IFWRRLRKAL (144 aa)).

Belongs to the Toll-like receptor family. As to quaternary structure, belongs to the lipopolysaccharide (LPS) receptor, a multi-protein complex containing at least CD14, LY96 and TLR4. Binding to bacterial LPS leads to homodimerization. Interacts with LY96 via the extracellular domain. Interacts with MYD88 and TIRAP via their respective TIR domains. Interacts with TICAM2. Interacts with NOX4. Interacts with CNPY3 and HSP90B1; this interaction is required for proper folding in the endoplasmic reticulum. Interacts with MAP3K21; this interaction leads to negative regulation of TLR4 signaling. Interacts with CD36, following CD36 stimulation by oxLDL or amyloid-beta 42, and forms a heterodimer with TLR6. The trimeric complex is internalized and triggers inflammatory response. LYN kinase activity facilitates TLR4-TLR6 heterodimerization and signal initiation. Interacts with TICAM1 in response to LPS in a WDFY1-dependent manner. Interacts with WDFY1 in response to LPS. Interacts with SMPDL3B. Interacts with CEACAM1; upon lipopolysaccharide stimulation, forms a complex including TLR4 and the phosphorylated form of SYK and CEACAM1, which in turn, recruits PTPN6 that dephosphorylates SYK, reducing the production of reactive oxygen species (ROS) and lysosome disruption, which in turn, reduces the activity of the inflammasome. Interacts with RFTN1; the interaction occurs in response to lipopolysaccharide stimulation. Interacts with SCIMP; the interaction occurs in response to lipopolysaccharide stimulation and is enhanced by phosphorylation of SCIMP by LYN. This interaction facilitates the phosphorylation of TLR4 by LYN which elicits a selective cytokine response in macrophages. Interacts with TRAF3IP3. Interacts with TREM1; this interaction enhances TLR4-mediated inflammatory response. Interacts with ZG16B/PAUF. Interacts with CD82; this interaction inhibits TLR4-mediated signaling pathway. Post-translationally, phosphorylated on tyrosine residues by LYN after binding lipopolysaccharide. In terms of processing, ubiquitinated by RNF128 via 'Lys-28'-linked polyubiquitin chains, leading to proteasomal degradation.

The protein resides in the cell membrane. Its subcellular location is the early endosome. The protein localises to the cell projection. It is found in the ruffle. Its function is as follows. Transmembrane receptor that functions as a pattern recognition receptor recognizing pathogen- and damage-associated molecular patterns (PAMPs and DAMPs) to induce innate immune responses via downstream signaling pathways. At the plasma membrane, cooperates with LY96 to mediate the innate immune response to bacterial lipopolysaccharide (LPS). Also involved in LPS-independent inflammatory responses triggered by free fatty acids, such as palmitate, and Ni(2+). Mechanistically, acts via MYD88, TIRAP and TRAF6, leading to NF-kappa-B activation, cytokine secretion and the inflammatory response. Alternatively, CD14-mediated TLR4 internalization via endocytosis is associated with the initiation of a MYD88-independent signaling via the TICAM1-TBK1-IRF3 axis leading to type I interferon production. In addition to the secretion of proinflammatory cytokines, initiates the activation of NLRP3 inflammasome and formation of a positive feedback loop between autophagy and NF-kappa-B signaling cascade. In complex with TLR6, promotes inflammation in monocytes/macrophages by associating with TLR6 and the receptor CD86. Upon ligand binding, such as oxLDL or amyloid-beta 42, the TLR4:TLR6 complex is internalized and triggers inflammatory response, leading to NF-kappa-B-dependent production of CXCL1, CXCL2 and CCL9 cytokines, via MYD88 signaling pathway, and CCL5 cytokine, via TICAM1 signaling pathway. In myeloid dendritic cells, vesicular stomatitis virus glycoprotein G but not LPS promotes the activation of IRF7, leading to type I IFN production in a CD14-dependent manner. This chain is Toll-like receptor 4 (TLR4), found in Felis catus (Cat).